The primary structure comprises 305 residues: MQRPDMSVAVAGIKMRNPVMTASGTFGYGAEFADYLDLESIGAMISKGLSLKPKAGNPTPRIVETPGGMLNAIGLQNVGIDAFIEQKLPYLKNVNTPVIVNLYGNTLEEYGEVAARLDGLAGVAGIEVNISCPNVKQGGIVFGTDPGAAQEVVRLVKKNTSKPMIVKLSPNVTDVVVMAKACADAGADALSLINTLTGMAIDLERRRPVLANVTGGLSGPAIKPVALRMVWQVGKAVKLPLIGIGGIMNGRDALEFMLAGATAVQVGTASFLDPSAAQRIAREMEQYLADHNIESVSSLIGALEL.

FMN-binding positions include serine 23 and 47-48; that span reads KG. Residues lysine 47 and 71–75 contribute to the substrate site; that span reads NAIGL. FMN is bound by residues asparagine 101 and asparagine 129. Residue asparagine 129 coordinates substrate. Catalysis depends on cysteine 132, which acts as the Nucleophile. Residues lysine 167 and isoleucine 193 each contribute to the FMN site. 194 to 195 is a substrate binding site; that stretch reads NT. Residues glycine 219, 245–246, and 267–268 each bind FMN; these read GG and GT.

Belongs to the dihydroorotate dehydrogenase family. Type 1 subfamily. As to quaternary structure, heterotetramer of 2 PyrK and 2 PyrD type B subunits. FMN is required as a cofactor.

The protein resides in the cytoplasm. It carries out the reaction (S)-dihydroorotate + NAD(+) = orotate + NADH + H(+). Its pathway is pyrimidine metabolism; UMP biosynthesis via de novo pathway; orotate from (S)-dihydroorotate (NAD(+) route): step 1/1. Functionally, catalyzes the conversion of dihydroorotate to orotate with NAD(+) as electron acceptor. This Geobacter sp. (strain M21) protein is Dihydroorotate dehydrogenase B (NAD(+)), catalytic subunit (pyrD).